Here is a 1876-residue protein sequence, read N- to C-terminus: Phenolphthiocerol/phthiocerol polyketide synthase subunit A (1876 aa).

In terms of domain architecture, Carrier 1 spans 9 to 83 (ADLRHWLIDY…ALAAYLAAPE (75 aa)). Ser-43 carries the O-(pantetheine 4'-phosphoryl)serine modification. The Ketosynthase family 3 (KS3) domain occupies 101 to 526 (DEPIAVVGMG…GTNAHVVIEQ (426 aa)). Catalysis depends on for beta-ketoacyl synthase activity residues Cys-273, His-408, and His-448. An acyltransferase region spans residues 624–950 (EGSPGPGTVF…NLNKAHTIHP (327 aa)). The For malonyltransferase activity role is filled by Ser-720. Residues 997–1112 (HTTVATVSAS…AQLSSSPSDS (116 aa)) form an N-terminal hotdog fold region. One can recognise a PKS/mFAS DH domain in the interval 997–1267 (HTTVATVSAS…YRALDFGLDV (271 aa)). The active-site Proton acceptor; for dehydratase activity is the His-1027. The segment at 1104 to 1130 (QLSSSPSDSASSLNEHHRANGQPPERA) is disordered. Low complexity predominate over residues 1106–1115 (SSSPSDSASS). The C-terminal hotdog fold stretch occupies residues 1130–1267 (AHRDLIPDLA…YRALDFGLDV (138 aa)). Asp-1186 acts as the Proton donor; for dehydratase activity in catalysis. The interval 1491-1728 (AAYLITGGLG…DGYDVAQAVV (238 aa)) is beta-ketoacyl reductase. Residue 1492–1551 (AYLITGGLGALGLLMADWLADRGAHRLVLTGRTPLPPRRDWQLDTLDTELRRRIDAIRAL) participates in NADP(+) binding. In terms of domain architecture, Carrier 2 spans 1759 to 1836 (EVRSELEQGL…SLASYLAKRV (78 aa)). O-(pantetheine 4'-phosphoryl)serine is present on Ser-1796.

The cofactor is NADP(+). Pantetheine 4'-phosphate serves as cofactor.

The enzyme catalyses icosanoyl-[(phenol)carboxyphthiodiolenone synthase] + 2 (S)-methylmalonyl-CoA + 3 malonyl-CoA + 5 NADPH + 10 H(+) = C32-carboxyphthiodiolenone-[(phenol)carboxyphthiodiolenone synthase] + 5 CO2 + 5 NADP(+) + 5 CoA + 2 H2O. The catalysed reaction is docosanoyl-[(phenol)carboxyphthiodiolenone synthase] + 2 (S)-methylmalonyl-CoA + 3 malonyl-CoA + 5 NADPH + 10 H(+) = C34-carboxyphthiodiolenone-[(phenol)carboxyphthiodiolenone synthase] + 5 CO2 + 5 NADP(+) + 5 CoA + 2 H2O. It catalyses the reaction 17-(4-hydroxyphenyl)heptadecanoyl-[(phenol)carboxyphthiodiolenone synthase] + 2 (S)-methylmalonyl-CoA + 3 malonyl-CoA + 5 NADPH + 10 H(+) = C35-(phenol)carboxyphthiodiolenone-[(phenol)carboxyphthiodiolenone synthase] + 5 CO2 + 5 NADP(+) + 5 CoA + 2 H2O. It carries out the reaction 19-(4-hydroxyphenyl)nonadecanoyl-[(phenol)carboxyphthiodiolenone synthase] + 2 (S)-methylmalonyl-CoA + 3 malonyl-CoA + 5 NADPH + 10 H(+) = C37-(phenol)carboxyphthiodiolenone-[(phenol)carboxyphthiodiolenone synthase] + 5 CO2 + 5 NADP(+) + 5 CoA + 2 H2O. It participates in lipid metabolism; fatty acid biosynthesis. In terms of biological role, part of the PpsABCDE complex involved in the biosynthesis of the lipid core common to phthiocerols and phenolphthiocerols by successive additions of malonyl-CoA or methylmalonyl-CoA extender units. PpsA can accept as substrate the activated forms of either icosanoyl (C20), docosanoyl (C22) or lignoceroyl (C24) groups from FadD26, or a (4-hydroxyphenyl)-C17 or (4-hydroxyphenyl)-C19 fatty acyl from FadD29. PpsA initiates the biosynthesis and extends its substrate using a malonyl-CoA extender unit. The PpsB and PpsC proteins add the second and third malonyl-CoA extender units. PpsD adds an (R)-methylmalonyl unit and PpsE adds a second (R)-methylmalonyl unit. The incorporation of the methylmalonyl units results in formation of two branched methyl groups in the elongated product. The chain is Phenolphthiocerol/phthiocerol polyketide synthase subunit A (ppsA) from Mycobacterium bovis (strain ATCC BAA-935 / AF2122/97).